We begin with the raw amino-acid sequence, 512 residues long: Rab11 family-interacting protein 2 (512 aa).

Residues 1-120 (MMLSEQAQKW…DKQRRKTEWF (120 aa)) enclose the C2 domain. The interval 15–102 (VQVTVLQAKD…GLDKFLGQVA (88 aa)) is necessary for its cellular translocation to the plasma membrane. Disordered regions lie at residues 174–231 (RKSD…MSDL) and 263–287 (PESG…NQPG). Polar residues-rich tracts occupy residues 221-231 (RLSSAHSMSDL) and 277-287 (SFDTSKLNQPG). Phosphoserine; by MARK2 is present on Ser-227. Ser-277 carries the post-translational modification Phosphoserine. Positions 323-325 (NPF) match the NPF 1 motif. Positions 347–374 (KESKREKREKVSLFERVTGKRDSRRPDK) are enriched in basic and acidic residues. A disordered region spans residues 347-390 (KESKREKREKVSLFERVTGKRDSRRPDKLNNGGSDSPCDLKSPS). Short sequence motifs (NPF) lie at residues 406 to 408 (NPF) and 440 to 442 (NPF). One can recognise an FIP-RBD domain in the interval 437–499 (PDNNPFDATA…EETPSILRVP (63 aa)). Residues 465–512 (ELLRRKDTHIRELEDYIDNLLVRVMEETPSILRVPYEPSRKAGKFTNS) are necessary for interaction with AP2A1, RAB11A, subcellular location, endocytosis activity and homooligomerization.

As to quaternary structure, homooligomerizes in a Rab11-independent manner. Forms a heterooligomeric complex with RAB11FIP4. Interacts with AP2A1, MYO5B, RAB25 and REPS1. Interacts with RAB11A and RAB11B (activated GTP-bound form). Interacts with NPC1L1. Interacts (via NPF motifs) with EHD1 and EHD3. Interacts with TICAM2; this interaction directs RAB11FIP2 to the phagosome. Interacts with RAB14 and RAB25 (GTP-bound forms). In terms of processing, phosphorylation at Ser-227 by MARK2 regulates epithelial cell polarity.

The protein resides in the cell membrane. The protein localises to the recycling endosome membrane. In terms of biological role, a Rab11 effector binding preferentially phosphatidylinositol 3,4,5-trisphosphate (PtdInsP3) and phosphatidic acid (PA) and acting in the regulation of the transport of vesicles from the endosomal recycling compartment (ERC) to the plasma membrane. Involved in insulin granule exocytosis. Also involved in receptor-mediated endocytosis and membrane trafficking of recycling endosomes, probably originating from clathrin-coated vesicles. Required in a complex with MYO5B and RAB11 for the transport of NPC1L1 to the plasma membrane. Also acts as a regulator of cell polarity. Plays an essential role in phagocytosis through a mechanism involving TICAM2, RAC1 and CDC42 Rho GTPases for controlling actin-dynamics. The chain is Rab11 family-interacting protein 2 (Rab11fip2) from Mus musculus (Mouse).